The following is a 530-amino-acid chain: Type 2 DNA topoisomerase 6 subunit B (530 aa).

ATP-binding positions include Asn42, Asp76, 96 to 98, 107 to 113, and Lys427; these read SSK and MYGLGVK.

It belongs to the TOP6B family. Homodimer. Heterotetramer of two Top6A and two Top6B chains.

It carries out the reaction ATP-dependent breakage, passage and rejoining of double-stranded DNA.. With respect to regulation, not inhibited by the DNA gyrase inhibitor novobiocin, instead inhibited by eukaryotic topoisomerase inhibitors such as m- and o-amsacrine, ellipticine, and the quinolone CP-115,953. Radicicol inhibits the ATPase activity. Relaxes both positive and negative supercoils and exhibits a strong decatenase and unknotting activity; it cannot introduce DNA supercoils. ATP is absolutely required for DNA cleavage; the nonhydrolyzable analog AMP-PNP generates nicked or linear products from a supercoiled dsDNA substrate. Generates staggered two-nucleotide long 5' overhangs. The enzyme is covalently attached transiently to the 5'-ends of the cleaved strands. The polypeptide is Type 2 DNA topoisomerase 6 subunit B (Saccharolobus shibatae (strain ATCC 51178 / DSM 5389 / JCM 8931 / NBRC 15437 / B12) (Sulfolobus shibatae)).